The sequence spans 89 residues: Huwentoxin-IV (89 aa).

Positions 1–24 (MVNMKASMFLALAGLVLLFVVCYA) are cleaved as a signal peptide. A propeptide spanning residues 25–52 (SESEEKEFSNELLSSVLAVDDNSKGEER) is cleaved from the precursor. Residue Glu-53 is modified to Pyrrolidone carboxylic acid (Glu); partial. 3 cysteine pairs are disulfide-bonded: Cys-54-Cys-69, Cys-61-Cys-76, and Cys-68-Cys-83. Residue Ile-87 is modified to Isoleucine amide.

Belongs to the neurotoxin 10 (Hwtx-1) family. 22 (Htx-4) subfamily. Post-translationally, two forms of huwentoxin-IV exist in the venom of H.schmidti, a non-N-terminally modified (HwTx-IV) and a naturally modified peptide with pyroglutamic acid residue at position 53 (mHwTx-IV). mHwTx-IV shows no observable difference with the unmodified toxin when applied to the TTX-S sodium channel of DRG neuron (IC(50)~50 nM) or when tested on hNav1.7/SCN9A (IC(50)=30.8 nM). In addition, similarly to the unmodified toxin, mHwTx-IV has only a weak affinity for lipid membranes. However, in contrast with HwTx-IV, which dissociates at moderate and high depolarization voltages (50-200 mV), mHwTx-IV inhibition of TTX-sensitive sodium channels is not reversed by strong depolarization voltages. Expressed by the venom gland.

The protein resides in the secreted. This lethal neurotoxin (without cyclization at position 53) inhibits neuronal voltage-gated sodium channel Nav1.2/SCN2A (IC(50)=10-150 nM), rNav1.3/SCN3A (IC(50)=338 nM), Nav1.6/SCN8A (IC(50)=117 nM), and hNav1.7/SCN9A (IC(50)=9.6-33 nM). It inhibits activation of sodium channel by trapping the voltage sensor of domain II (DIIS4) in the closed configuration. The toxin neither shifts the Nav1.7/SCN9A activation curve nor modifies the slope factor. It does not slow fast-inactivation of hNav1.7/SCN9A channels. In addition, it has only a weak affinity for lipid membranes. This toxin also exists with a pyroglutamate at position 53. The sole difference observed between modified (mHwTx-IV) and unmodified toxins is that moderate or high depolarization voltages (200 mV) permit the unmodified toxin to dissociate, whereas mHwTx-IV toxin does not dissociate, even at high depolarization voltages. These data indicate that mHwTx-IV strongly binds to voltage sensor of sodium channel even at extreme depolarization voltages. The chain is Huwentoxin-IV from Cyriopagopus schmidti (Chinese bird spider).